Reading from the N-terminus, the 385-residue chain is Na(+)/H(+) antiporter NhaA (385 aa).

A run of 11 helical transmembrane segments spans residues 9 to 29, 45 to 65, 87 to 107, 114 to 134, 155 to 175, 198 to 218, 220 to 235, 245 to 265, 282 to 302, 312 to 332, and 345 to 365; these read YSAI…NVLD, IFGL…VFFF, IIPG…YLSV, GWPV…AIFG, AGIV…WIIV, TFLI…SVYQ, GIHA…IMLN, ALEP…AAMV, ILLG…IIAL, FFNL…SLLM, and QGVI…IILM.

The protein belongs to the NhaA Na(+)/H(+) (TC 2.A.33) antiporter family.

The protein resides in the cell membrane. It catalyses the reaction Na(+)(in) + 2 H(+)(out) = Na(+)(out) + 2 H(+)(in). Na(+)/H(+) antiporter that extrudes sodium in exchange for external protons. This is Na(+)/H(+) antiporter NhaA from Tropheryma whipplei (strain Twist) (Whipple's bacillus).